The chain runs to 226 residues: 2,3-bisphosphoglycerate-dependent phosphoglycerate mutase (226 aa).

Substrate is bound by residues Arg8–Asn15, Thr21–Gly22, Arg58, Glu109–Tyr112, Lys120, Arg136–Arg137, and Gly180–Asn181. His9 (tele-phosphohistidine intermediate) is an active-site residue. Glu109 (proton donor/acceptor) is an active-site residue.

The protein belongs to the phosphoglycerate mutase family. BPG-dependent PGAM subfamily.

It carries out the reaction (2R)-2-phosphoglycerate = (2R)-3-phosphoglycerate. The protein operates within carbohydrate degradation; glycolysis; pyruvate from D-glyceraldehyde 3-phosphate: step 3/5. In terms of biological role, catalyzes the interconversion of 2-phosphoglycerate and 3-phosphoglycerate. This is 2,3-bisphosphoglycerate-dependent phosphoglycerate mutase from Chlamydia trachomatis serovar L2 (strain ATCC VR-902B / DSM 19102 / 434/Bu).